The following is a 66-amino-acid chain: Large ribosomal subunit protein bL35 (66 aa).

Basic residues-rich tracts occupy residues 1 to 16 and 31 to 45; these read MPKQ…RFKR and HRFH…RQLR. Residues 1-52 form a disordered region; the sequence is MPKQKTHRASAKRFKRTGNGGLKRSNAYTSHRFHGKTKKQRRQLRKASMVSA.

Belongs to the bacterial ribosomal protein bL35 family.

In Ligilactobacillus salivarius (strain UCC118) (Lactobacillus salivarius), this protein is Large ribosomal subunit protein bL35.